Here is a 374-residue protein sequence, read N- to C-terminus: Cathepsin W (374 aa).

Positions 1 to 21 (MAITVYLSCLLVLSMAGLAQG) are cleaved as a signal peptide. The propeptide occupies 22 to 127 (IKSSLRSQDP…EVGSEEWGES (106 aa)). Disulfide bonds link C150/C191 and C184/C226. The active site involves C153. N-linked (GlcNAc...) asparagine glycosylation is present at N205. Catalysis depends on residues H291 and N329. N347 carries N-linked (GlcNAc...) asparagine glycosylation.

The protein belongs to the peptidase C1 family.

It is found in the endoplasmic reticulum. May have a specific function in the mechanism or regulation of T-cell cytolytic activity. The polypeptide is Cathepsin W (CTSW) (Felis catus (Cat)).